The sequence spans 365 residues: Flagellar P-ring protein (365 aa).

Residues 1–19 form the signal peptide; it reads MIKFLSALILLLVTTAAQA.

The protein belongs to the FlgI family. In terms of assembly, the basal body constitutes a major portion of the flagellar organelle and consists of four rings (L,P,S, and M) mounted on a central rod.

The protein resides in the periplasm. It is found in the bacterial flagellum basal body. Assembles around the rod to form the L-ring and probably protects the motor/basal body from shearing forces during rotation. This is Flagellar P-ring protein from Shigella dysenteriae serotype 1 (strain Sd197).